We begin with the raw amino-acid sequence, 629 residues long: MNKQQKEFKSFYSIRKSSLGVASVAISTLLLLMSNGEAQAAEETGGTNTEAQPKTEAVASPSTTTEKAPEAKSVANAVSVSNKEVEAPTSETKEVKPAAKSDNNTYPILNQELREAIKNPAIKDKDHSAPNSRPIDFEMKKENGEQQFYHYASSVKPARVIFTDSKPEIELGLQSGQFWRKFEVYEGDKKLPIKLVSYDTVKDYAYIRFSVSNGTKAVKIVSSTHFNNKEEKYDYTLMEFAQPIYNSADKFKTEEDYKAEKLLAPYKKAKTLERQVYELNKIQDKLPEKLKAEYKKKLEETKKALDEQVKSAITEFQNVQPTNEKMTDLQDTKYVVYESVENNESMMDTFVKHPIKTGMLNGKKYMVMETTNDDYWKDFMVEGQRVRTISKDAKNNTRTIIFPYVEGKTLYDAIVKVHVKTIDYDGQYHVRIVDKEAFTKANADKTNKKEQQDNSAKKETTPATPSKPTTPPVEKESQKQDSQKDDNKQSPSVEKENDASSESGKDKTPATKPAKGEVESSSTTPTKVVSTTQNAAKPTTASSETTKDVVQTSAGSSEAKDSAPLQKANIKNTNDGHTQSENNKNTQENKAKSLPQTGEESNKDMTLPLMSLLALSSIIAFVLPRKRKN.

The first 40 residues, 1–40 (MNKQQKEFKSFYSIRKSSLGVASVAISTLLLLMSNGEAQA), serve as a signal peptide directing secretion. The YSIRK-G/S signaling motif signature appears at 12–23 (YSIRKSSLGVAS). Residues 38–104 (AQAAEETGGT…VKPAAKSDNN (67 aa)) are disordered. The span at 83–99 (KEVEAPTSETKEVKPAA) shows a compositional bias: basic and acidic residues. NEAT domains are found at residues 128–253 (SAPN…KFKT) and 325–442 (KMTD…TKAN). The heme site is built by Met-346 and Tyr-424. Basic and acidic residues-rich tracts occupy residues 443–460 (ADKT…KKET) and 473–518 (VEKE…KGEV). The interval 443-605 (ADKTNKKEQQ…QTGEESNKDM (163 aa)) is disordered. Residues 519–532 (ESSSTTPTKVVSTT) show a composition bias toward low complexity. Polar residues-rich tracts occupy residues 533–556 (QNAA…SAGS) and 569–599 (NIKN…QTGE). The LPXTG sorting signal motif lies at 594-598 (LPQTG). Thr-597 carries the post-translational modification Pentaglycyl murein peptidoglycan amidated threonine. A propeptide spans 598–629 (GEESNKDMTLPLMSLLALSSIIAFVLPRKRKN) (removed by sortase A).

It belongs to the IsdB family. Interacts with host HBA; this interaction allows heme extraction as iron source. Interacts with IsdA.

It localises to the secreted. The protein resides in the cell wall. In terms of biological role, cell wall-anchored surface receptor that extracts heme from oxidized metHb to enable growth on hemoglobin as a sole iron source. Rapidly extracts heme from hemoglobin and transfers it to IsdA or IsdC, which then relays it to the membrane transporter/IsdEF for internalization. Also promotes resistance to hydrogen peroxide and killing by neutrophils. The polypeptide is Iron-regulated surface determinant protein B (isdB) (Staphylococcus aureus (strain bovine RF122 / ET3-1)).